The following is a 242-amino-acid chain: ATP synthase subunit a (242 aa).

The next 6 membrane-spanning stretches (helical) occupy residues 29-49, 84-104, 114-134, 140-160, 181-201, and 203-223; these read SSIY…LAFY, FIPL…LGMT, IIVT…VGFV, FLTL…MIVI, MAGH…MIYL, and FLPI…AILQ.

It belongs to the ATPase A chain family. As to quaternary structure, F-type ATPases have 2 components, CF(1) - the catalytic core - and CF(0) - the membrane proton channel. CF(1) has five subunits: alpha(3), beta(3), gamma(1), delta(1), epsilon(1). CF(0) has three main subunits: a(1), b(2) and c(9-12). The alpha and beta chains form an alternating ring which encloses part of the gamma chain. CF(1) is attached to CF(0) by a central stalk formed by the gamma and epsilon chains, while a peripheral stalk is formed by the delta and b chains.

It localises to the cell inner membrane. Key component of the proton channel; it plays a direct role in the translocation of protons across the membrane. The polypeptide is ATP synthase subunit a (Rickettsia conorii (strain ATCC VR-613 / Malish 7)).